Consider the following 157-residue polypeptide: 2-C-methyl-D-erythritol 2,4-cyclodiphosphate synthase (157 aa).

Positions 9 and 11 each coordinate a divalent metal cation. Residues 9 to 11 (DVH) and 35 to 36 (HS) contribute to the 4-CDP-2-C-methyl-D-erythritol 2-phosphate site. Residue His-43 coordinates a divalent metal cation. Residues 57-59 (DIG), 62-66 (FPETD), 133-136 (TTME), Phe-140, and Lys-143 each bind 4-CDP-2-C-methyl-D-erythritol 2-phosphate.

This sequence belongs to the IspF family. As to quaternary structure, homotrimer. The cofactor is a divalent metal cation.

It catalyses the reaction 4-CDP-2-C-methyl-D-erythritol 2-phosphate = 2-C-methyl-D-erythritol 2,4-cyclic diphosphate + CMP. It participates in isoprenoid biosynthesis; isopentenyl diphosphate biosynthesis via DXP pathway; isopentenyl diphosphate from 1-deoxy-D-xylulose 5-phosphate: step 4/6. Functionally, involved in the biosynthesis of isopentenyl diphosphate (IPP) and dimethylallyl diphosphate (DMAPP), two major building blocks of isoprenoid compounds. Catalyzes the conversion of 4-diphosphocytidyl-2-C-methyl-D-erythritol 2-phosphate (CDP-ME2P) to 2-C-methyl-D-erythritol 2,4-cyclodiphosphate (ME-CPP) with a corresponding release of cytidine 5-monophosphate (CMP). The polypeptide is 2-C-methyl-D-erythritol 2,4-cyclodiphosphate synthase (Enterococcus faecalis (strain ATCC 700802 / V583)).